The primary structure comprises 72 residues: Conotoxin VnMKLT2-021 (72 aa).

Residues 1–22 (MKLTCVLIVAVLFLTACQLTTA) form the signal peptide. A propeptide spanning residues 23 to 45 (ASYARSEREHPDLGSSDQNSKLT) is cleaved from the precursor. The interval 25–44 (YARSEREHPDLGSSDQNSKL) is disordered. Cystine bridges form between Cys-48-Cys-62, Cys-55-Cys-66, and Cys-61-Cys-71.

It belongs to the conotoxin O1 superfamily. Expressed by the venom duct.

The protein resides in the secreted. The protein is Conotoxin VnMKLT2-021 of Conus ventricosus (Mediterranean cone).